The sequence spans 224 residues: Ribonuclease T (224 aa).

The segment covering 1-11 has biased composition (acidic residues); that stretch reads MSEDLYEDDLD. Residues 1 to 22 are disordered; sequence MSEDLYEDDLDTQGSSGPRHPM. Residues 32 to 206 enclose the Exonuclease domain; sequence VVVDVETGGF…YDTEKTAELF (175 aa). Residues D35, E37, H193, and D198 each coordinate Mg(2+). H193 functions as the Proton donor/acceptor in the catalytic mechanism.

This sequence belongs to the RNase T family. In terms of assembly, homodimer. It depends on Mg(2+) as a cofactor.

Its function is as follows. Trims short 3' overhangs of a variety of RNA species, leaving a one or two nucleotide 3' overhang. Responsible for the end-turnover of tRNA: specifically removes the terminal AMP residue from uncharged tRNA (tRNA-C-C-A). Also appears to be involved in tRNA biosynthesis. The sequence is that of Ribonuclease T from Pseudomonas putida (strain ATCC 700007 / DSM 6899 / JCM 31910 / BCRC 17059 / LMG 24140 / F1).